The sequence spans 291 residues: MEMO1 family protein TON_0132 (291 aa).

It belongs to the MEMO1 family.

The protein is MEMO1 family protein TON_0132 of Thermococcus onnurineus (strain NA1).